The chain runs to 403 residues: Na(+)-translocating NADH-quinone reductase subunit B (403 aa).

4 helical membrane-spanning segments follow: residues 56–76, 121–141, 164–184, and 195–212; these read MMIL…WNTG, AYFL…EVLF, LPPS…VVIG, and FLNP…AYPA. Residue Thr230 is modified to FMN phosphoryl threonine. A run of 6 helical transmembrane segments spans residues 237–257, 265–285, 287–307, 312–332, 348–368, and 371–391; these read AGGV…FLGI, TSTL…IAAW, IVAG…LIGS, MFAM…GTLF, WAFG…NPAF, and GMML…HFVV.

The protein belongs to the NqrB/RnfD family. Composed of six subunits; NqrA, NqrB, NqrC, NqrD, NqrE and NqrF. FMN is required as a cofactor.

It localises to the cell inner membrane. It carries out the reaction a ubiquinone + n Na(+)(in) + NADH + H(+) = a ubiquinol + n Na(+)(out) + NAD(+). Its function is as follows. NQR complex catalyzes the reduction of ubiquinone-1 to ubiquinol by two successive reactions, coupled with the transport of Na(+) ions from the cytoplasm to the periplasm. NqrA to NqrE are probably involved in the second step, the conversion of ubisemiquinone to ubiquinol. This chain is Na(+)-translocating NADH-quinone reductase subunit B, found in Azotobacter vinelandii (strain DJ / ATCC BAA-1303).